We begin with the raw amino-acid sequence, 628 residues long: MRPIPSILGALGAFATLSAAAPLESTLYGPGASHARSMLGSSFGVPGNQTFDYVVIGGGTAGLAIASRLAEQGAGTVAVIEAGGFYELNNGNLSQIPANDAYYVGKDLDDWQPGVDWGFHTVPQAGAYGRASHYARGKCLGGSSARNYMAYQRGTKSSYQRWADMVGDQSYAWENFLPFFEKSLHFTPANDALRGANATVQYDPAVLGNGQGPLSVTYSHYVQSFATWAQKAFLEMGLAVRNCFQSGELLGQSFGMYTINATTMHRESSETSFLRRALAYPNFMVFQSTLAKRILFDGKKRAVAVQLDTQGYRYTLTARKEVVLSAGAFQSPQLLMVSGVGPAATLQQHGIPLVADRPGVGQNLQDHIIYAPSYRVDLITQSALLNATFEAQANRDYHERAAGIYANPTSDILAWEKIPEPKRSAWLSNTTRRALAQYPADWPEIEFLTMGGFFGYQNNYVRDNPSDGYNYASLAVSLCTPRSRGNVSIASADAAVPPLINPNWLTDPVDVELAVAAFKRARDFFGTSALKPVLIGDEYFPGERVATDAQIEDHVRKSFDTIFHASCTCAMGKREDQMAVVDSKARVIGVDALRVVDASAFPMLPPGHPQSTIYALAEKIACDISGAC.

Residues 1–20 (MRPIPSILGALGAFATLSAA) form the signal peptide. The N-linked (GlcNAc...) asparagine glycan is linked to Asn-48. Residues 60–61 (TA) and 81–82 (EA) each bind FAD. A glycan (N-linked (GlcNAc...) asparagine) is linked at Asn-92. Residue 147 to 150 (NYMA) coordinates FAD. Asn-197, Asn-260, Asn-386, Asn-429, and Asn-486 each carry an N-linked (GlcNAc...) asparagine glycan. The Proton acceptor role is filled by His-564. FAD contacts are provided by residues Ala-598 and 609–610 (PQ).

This sequence belongs to the GMC oxidoreductase family. Homodimer. The cofactor is FAD.

It is found in the cytoplasm. The protein localises to the cell cortex. Its subcellular location is the vacuole. It localises to the secreted. The protein resides in the cell wall. The enzyme catalyses (E)-ascladiol + A = patulin + AH2. It functions in the pathway mycotoxin biosynthesis; patulin biosynthesis. Functionally, patulin synthase; part of the gene cluster that mediates the biosynthesis of patulin, an acetate-derived tetraketide mycotoxin produced by several fungal species that shows antimicrobial properties against several bacteria. PatE catalyzes the last step of the pathway which is the conversion of E-ascladiol to patulin. The pathway begins with the synthesis of 6-methylsalicylic acid by the polyketide synthase (PKS) patK via condensation of acetate and malonate units. The 6-methylsalicylic acid decarboxylase patG then catalyzes the decarboxylation of 6-methylsalicylic acid to yield m-cresol (also known as 3-methylphenol). These first reactions occur in the cytosol. The intermediate m-cresol is then transported into the endoplasmic reticulum where the cytochrome P450 monooxygenase patH converts it to m-hydroxybenzyl alcohol, which is further converted to gentisyl alcohol by the cytochrome P450 monooxygenase patI. The oxidoreductases patJ and patO further convert gentisyl alcohol to isoepoxydon in the vacuole. PatN catalyzes then the transformation of isoepoxydon into phyllostine. The cluster protein patF is responsible for the conversion from phyllostine to neopatulin whereas the alcohol dehydrogenase patD converts neopatulin to E-ascladiol. The steps between isoepoxydon and E-ascladiol occur in the cytosol, and E-ascladiol is probably secreted to the extracellular space by one of the cluster-specific transporters patC or patM. Finally, the secreted patulin synthase patE catalyzes the conversion of E-ascladiol to patulin. This Aspergillus clavatus (strain ATCC 1007 / CBS 513.65 / DSM 816 / NCTC 3887 / NRRL 1 / QM 1276 / 107) protein is Patulin synthase.